We begin with the raw amino-acid sequence, 61 residues long: Large ribosomal subunit protein bL32 (61 aa).

A compositionally biased stretch (basic residues) spans 1–16; sequence MAVPKKKTSKSRKNMR. The tract at residues 1-20 is disordered; that stretch reads MAVPKKKTSKSRKNMRRAHD.

This sequence belongs to the bacterial ribosomal protein bL32 family.

The sequence is that of Large ribosomal subunit protein bL32 from Trichlorobacter lovleyi (strain ATCC BAA-1151 / DSM 17278 / SZ) (Geobacter lovleyi).